Reading from the N-terminus, the 230-residue chain is Somatolactin (230 aa).

Residues 1-23 (MIKTKVLQAWMGIWLCAVNGLLG) form the signal peptide. Cystine bridges form between C28–C38, C87–C202, and C219–C227. Residue N177 is glycosylated (N-linked (GlcNAc...) asparagine).

Belongs to the somatotropin/prolactin family.

Its subcellular location is the secreted. The polypeptide is Somatolactin (Ictalurus punctatus (Channel catfish)).